The sequence spans 232 residues: tRNA pseudouridine synthase B (232 aa).

Catalysis depends on aspartate 53, which acts as the Nucleophile.

The protein belongs to the pseudouridine synthase TruB family. Type 1 subfamily.

The enzyme catalyses uridine(55) in tRNA = pseudouridine(55) in tRNA. Functionally, responsible for synthesis of pseudouridine from uracil-55 in the psi GC loop of transfer RNAs. The chain is tRNA pseudouridine synthase B from Malacoplasma penetrans (strain HF-2) (Mycoplasma penetrans).